We begin with the raw amino-acid sequence, 243 residues long: Probable 6-phosphogluconolactonase (243 aa).

This sequence belongs to the glucosamine/galactosamine-6-phosphate isomerase family. 6-phosphogluconolactonase subfamily.

It catalyses the reaction 6-phospho-D-glucono-1,5-lactone + H2O = 6-phospho-D-gluconate + H(+). Its pathway is carbohydrate degradation; pentose phosphate pathway; D-ribulose 5-phosphate from D-glucose 6-phosphate (oxidative stage): step 2/3. Its function is as follows. Hydrolysis of 6-phosphogluconolactone to 6-phosphogluconate. This is Probable 6-phosphogluconolactonase from Drosophila melanogaster (Fruit fly).